The primary structure comprises 838 residues: Outer membrane usher protein YraJ (838 aa).

The signal sequence occupies residues 1–40; the sequence is MPQRHHQGHKRTPKQLALIIKRCLPMVLTGSGMLCTTANA. Cysteine 815 and cysteine 837 form a disulfide bridge.

Belongs to the fimbrial export usher family.

It localises to the cell outer membrane. Functionally, part of the yraHIJK fimbrial operon. Could contribute to adhesion to various surfaces in specific environmental niches. Increases adhesion to eukaryotic T24 bladder epithelial cells in the absence of fim operon. Probably involved in the export and assembly of fimbrial subunits across the outer membrane. In Escherichia coli (strain K12), this protein is Outer membrane usher protein YraJ (yraJ).